The chain runs to 281 residues: Pantothenate synthetase (281 aa).

30 to 37 (MGYLHEGH) serves as a coordination point for ATP. Histidine 37 serves as the catalytic Proton donor. Glutamine 61 serves as a coordination point for (R)-pantoate. Glutamine 61 provides a ligand contact to beta-alanine. 147–150 (GEKD) provides a ligand contact to ATP. Position 153 (glutamine 153) interacts with (R)-pantoate. ATP-binding positions include isoleucine 176 and 184–187 (KSSR).

Belongs to the pantothenate synthetase family. As to quaternary structure, homodimer.

It is found in the cytoplasm. It carries out the reaction (R)-pantoate + beta-alanine + ATP = (R)-pantothenate + AMP + diphosphate + H(+). It functions in the pathway cofactor biosynthesis; (R)-pantothenate biosynthesis; (R)-pantothenate from (R)-pantoate and beta-alanine: step 1/1. Catalyzes the condensation of pantoate with beta-alanine in an ATP-dependent reaction via a pantoyl-adenylate intermediate. The chain is Pantothenate synthetase from Clostridium botulinum (strain Langeland / NCTC 10281 / Type F).